The following is a 288-amino-acid chain: Bifunctional protein FolD 2 (288 aa).

NADP(+)-binding positions include 166 to 168 and Ser191; that span reads GRS.

It belongs to the tetrahydrofolate dehydrogenase/cyclohydrolase family. As to quaternary structure, homodimer.

The enzyme catalyses (6R)-5,10-methylene-5,6,7,8-tetrahydrofolate + NADP(+) = (6R)-5,10-methenyltetrahydrofolate + NADPH. It carries out the reaction (6R)-5,10-methenyltetrahydrofolate + H2O = (6R)-10-formyltetrahydrofolate + H(+). It participates in one-carbon metabolism; tetrahydrofolate interconversion. Functionally, catalyzes the oxidation of 5,10-methylenetetrahydrofolate to 5,10-methenyltetrahydrofolate and then the hydrolysis of 5,10-methenyltetrahydrofolate to 10-formyltetrahydrofolate. The polypeptide is Bifunctional protein FolD 2 (Frankia casuarinae (strain DSM 45818 / CECT 9043 / HFP020203 / CcI3)).